A 951-amino-acid chain; its full sequence is Leucine-rich repeat-containing G-protein coupled receptor 4 (951 aa).

Positions 1–24 (MPGPLRLLCFFALGLLGSAGPSGA) are cleaved as a signal peptide. The LRRNT domain occupies 25 to 57 (APPLCAAPCSCDGDRRVDCSGKGLTAVPEGLSA). Over 25–544 (APPLCAAPCS…LLGSWMIRLT (520 aa)) the chain is Extracellular. Disulfide bonds link Cys29/Cys35 and Cys33/Cys43. 10 LRR repeats span residues 58–79 (FTQA…AFKS), 82–103 (FLEE…ALSG), 106–127 (ELKV…AIHG), 130–151 (ALQS…SFEG), 154–177 (QLRH…SNLP), 178–199 (TLQA…AFTN), 202–223 (SLVV…CFDG), 226–247 (NLET…IKAL), 249–270 (SLKE…AFGG), and 273–294 (LLRT…AFHN). An N-linked (GlcNAc...) asparagine glycan is attached at Asn68. Residues Asn188 and Asn199 are each glycosylated (N-linked (GlcNAc...) asparagine). N-linked (GlcNAc...) asparagine glycosylation is found at Asn294 and Asn314. 5 LRR repeats span residues 320–341 (HLES…LCQN), 344–365 (MLRT…NGCR), 366–387 (ALEE…TFQG), 390–411 (SLRI…AFAK), and 414–435 (TITN…GLNG). A disulfide bridge connects residues Cys339 and Cys364. 2 cysteine pairs are disulfide-bonded: Cys470–Cys522 and Cys471–Cys476. N-linked (GlcNAc...) asparagine glycosylation occurs at Asn505. A helical transmembrane segment spans residues 545–565 (VWFIFLVALLFNLLVILTVFA). Residues 566 to 575 (SCSSLPASKL) lie on the Cytoplasmic side of the membrane. Residues 576–596 (FIGLISVSNLLMGIYTGILTF) form a helical membrane-spanning segment. At 597-619 (LDAVSWGRFAEFGIWWETGSGCK) the chain is on the extracellular side. Cys618 and Cys693 are joined by a disulfide. Residues 620–640 (VAGSLAVFSSESAVFLLTLAA) traverse the membrane as a helical segment. Topologically, residues 641-661 (VERSVFAKDLMKHGKSSHLRQ) are cytoplasmic. The helical transmembrane segment at 662-682 (FQVAALLALLGAAVAGCFPLF) threads the bilayer. Over 683-703 (HGGQYSASPLCLPFPTGETPS) the chain is Extracellular. The chain crosses the membrane as a helical span at residues 704–724 (LGFTVTLVLLNSLAFLLMAII). At 725 to 756 (YTKLYCNLEKEDLSENSQSSVIKHVAWLIFTN) the chain is on the cytoplasmic side. The helical transmembrane segment at 757–777 (CIFFCPVAFFSFAPLITAISI) threads the bilayer. Over 778–783 (SPEIMK) the chain is Extracellular. A helical membrane pass occupies residues 784–804 (SVTLIFFPLPACLNPVLYVFF). Residues 805–951 (NPKFKEDWKL…YAYNLQRVRD (147 aa)) are Cytoplasmic-facing. A Phosphoserine modification is found at Ser920.

The protein belongs to the G-protein coupled receptor 1 family.

It is found in the cell membrane. Receptor for R-spondins that potentiates the canonical Wnt signaling pathway and is involved in the formation of various organs. Upon binding to R-spondins (RSPO1, RSPO2, RSPO3 or RSPO4), associates with phosphorylated LRP6 and frizzled receptors that are activated by extracellular Wnt receptors, triggering the canonical Wnt signaling pathway to increase expression of target genes. In contrast to classical G-protein coupled receptors, does not activate heterotrimeric G-proteins to transduce the signal. Its function as activator of the Wnt signaling pathway is required for the development of various organs, including liver, kidney, intestine, bone, reproductive tract and eye. May also act as a receptor for norrin (NDP), such results however require additional confirmation in vivo. Required during spermatogenesis to activate the Wnt signaling pathway in peritubular myoid cells. Required for the maintenance of intestinal stem cells and Paneth cell differentiation in postnatal intestinal crypts. Acts as a regulator of bone formation and remodeling. Involved in kidney development; required for maintaining the ureteric bud in an undifferentiated state. Involved in the development of the anterior segment of the eye. Required during erythropoiesis. Also acts as a negative regulator of innate immunity by inhibiting TLR2/TLR4 associated pattern-recognition and pro-inflammatory cytokine production. Plays an important role in regulating the circadian rhythms of plasma lipids, partially through regulating the rhythmic expression of MTTP. Required for proper development of GnRH neurons (gonadotropin-releasing hormone expressing neurons) that control the release of reproductive hormones from the pituitary gland. The sequence is that of Leucine-rich repeat-containing G-protein coupled receptor 4 (Lgr4) from Rattus norvegicus (Rat).